A 545-amino-acid polypeptide reads, in one-letter code: DNA mismatch repair protein MutL (545 aa).

The segment at 516 to 545 (GRRSGARGGGEARPRPQEESFPEAPLPREP) is disordered.

It belongs to the DNA mismatch repair MutL/HexB family.

Its function is as follows. This protein is involved in the repair of mismatches in DNA. It is required for dam-dependent methyl-directed DNA mismatch repair. May act as a 'molecular matchmaker', a protein that promotes the formation of a stable complex between two or more DNA-binding proteins in an ATP-dependent manner without itself being part of a final effector complex. The chain is DNA mismatch repair protein MutL from Thermus thermophilus (strain ATCC BAA-163 / DSM 7039 / HB27).